We begin with the raw amino-acid sequence, 884 residues long: DNA primase (884 aa).

The CHC2-type zinc finger occupies 825-864 (CISSNHRNKTQSVRIFIVLYTNKKDEVTITLMSQCFAHKC).

Belongs to the herpesviridae DNA primase family. As to quaternary structure, associates with the helicase and the primase-associated factor to form the helicase-primase factor.

The protein localises to the host nucleus. In terms of biological role, essential component of the helicase/primase complex. Unwinds the DNA at the replication forks and generates single-stranded DNA for both leading and lagging strand synthesis. The primase initiates primer synthesis and thereby produces large amount of short RNA primers on the lagging strand that the polymerase elongates using dNTPs. The chain is DNA primase (56) from Equine herpesvirus 2 (strain 86/87) (EHV-2).